A 113-amino-acid chain; its full sequence is ATP-dependent Clp protease adapter protein ClpS (113 aa).

Over residues 1-11 the composition is skewed to basic and acidic residues; it reads MHRDLHMMSDR. Residues 1–25 are disordered; it reads MHRDLHMMSDRSEDDGDTSILTATK.

Belongs to the ClpS family. Binds to the N-terminal domain of the chaperone ClpA.

Involved in the modulation of the specificity of the ClpAP-mediated ATP-dependent protein degradation. The protein is ATP-dependent Clp protease adapter protein ClpS of Roseobacter denitrificans (strain ATCC 33942 / OCh 114) (Erythrobacter sp. (strain OCh 114)).